Reading from the N-terminus, the 531-residue chain is Splicing factor ESS-2 (531 aa).

Disordered regions lie at residues 104–163 (RTPI…RKKK) and 453–531 (PFAS…GDFF). The span at 105–114 (TPITTRSTTE) shows a compositional bias: polar residues. Composition is skewed to low complexity over residues 125–136 (TPGPSSASTSSA) and 464–477 (SRPS…TPGS). Positions 480-498 (SRGSTTPGSSWSQGAQTPG) are enriched in polar residues.

Belongs to the ESS2 family.

The protein localises to the nucleus. In terms of biological role, regulates pre-mRNA splicing. The protein is Splicing factor ESS-2 (ess-2) of Caenorhabditis elegans.